A 372-amino-acid chain; its full sequence is Glutamate 5-kinase (372 aa).

Residue Lys-14 coordinates ATP. Residues Ser-54, Asp-141, and Asn-153 each coordinate substrate. ATP contacts are provided by residues Thr-173–Asp-174 and Thr-215–Lys-221. One can recognise a PUA domain in the interval Gln-280–Asp-358.

The protein belongs to the glutamate 5-kinase family.

The protein localises to the cytoplasm. It catalyses the reaction L-glutamate + ATP = L-glutamyl 5-phosphate + ADP. It participates in amino-acid biosynthesis; L-proline biosynthesis; L-glutamate 5-semialdehyde from L-glutamate: step 1/2. In terms of biological role, catalyzes the transfer of a phosphate group to glutamate to form L-glutamate 5-phosphate. The sequence is that of Glutamate 5-kinase from Shewanella oneidensis (strain ATCC 700550 / JCM 31522 / CIP 106686 / LMG 19005 / NCIMB 14063 / MR-1).